The primary structure comprises 308 residues: Cyclin-D2-1 (308 aa).

Positions 286 to 308 (EGLSYDSSSPPPPKRRKRSPPGT) are disordered. Residues 298-308 (PKRRKRSPPGT) show a composition bias toward basic residues.

The protein belongs to the cyclin family. Cyclin D subfamily.

This Oryza sativa subsp. japonica (Rice) protein is Cyclin-D2-1 (CYCD2-1).